Consider the following 162-residue polypeptide: MFRVGNGIDFHKLIHEPFRPLVLAGVEIKSEFAFLGHSDADVILHAVADAILGALSLGDIGVHFPDTDPQYKNMKSTRIIEKCLELVAEKKFKLINVDCTYVGDHPKISPIRAELNASLANITKLPLDCVSIKATTSEGMGALGRSEGVMVMATVLIESLKK.

2 residues coordinate a divalent metal cation: Asp-9 and His-11. 4-CDP-2-C-methyl-D-erythritol 2-phosphate is bound by residues 9–11 and 37–38; these read DFH and HS. Residue His-45 participates in a divalent metal cation binding. 4-CDP-2-C-methyl-D-erythritol 2-phosphate is bound by residues 59–61, 64–68, 135–138, and Arg-145; these read DIG, FPDTD, and TTSE.

The protein belongs to the IspF family. In terms of assembly, homotrimer. Requires a divalent metal cation as cofactor.

The catalysed reaction is 4-CDP-2-C-methyl-D-erythritol 2-phosphate = 2-C-methyl-D-erythritol 2,4-cyclic diphosphate + CMP. It functions in the pathway isoprenoid biosynthesis; isopentenyl diphosphate biosynthesis via DXP pathway; isopentenyl diphosphate from 1-deoxy-D-xylulose 5-phosphate: step 4/6. Functionally, involved in the biosynthesis of isopentenyl diphosphate (IPP) and dimethylallyl diphosphate (DMAPP), two major building blocks of isoprenoid compounds. Catalyzes the conversion of 4-diphosphocytidyl-2-C-methyl-D-erythritol 2-phosphate (CDP-ME2P) to 2-C-methyl-D-erythritol 2,4-cyclodiphosphate (ME-CPP) with a corresponding release of cytidine 5-monophosphate (CMP). The sequence is that of 2-C-methyl-D-erythritol 2,4-cyclodiphosphate synthase from Leptospira biflexa serovar Patoc (strain Patoc 1 / Ames).